Here is a 109-residue protein sequence, read N- to C-terminus: Iron-sulfur cluster assembly protein CyaY (109 aa).

This sequence belongs to the frataxin family.

Functionally, involved in iron-sulfur (Fe-S) cluster assembly. May act as a regulator of Fe-S biogenesis. The chain is Iron-sulfur cluster assembly protein CyaY from Burkholderia lata (strain ATCC 17760 / DSM 23089 / LMG 22485 / NCIMB 9086 / R18194 / 383).